The chain runs to 740 residues: Catalase-peroxidase (740 aa).

The interval 1 to 32 is disordered; the sequence is MPEDRPIEDSPPIGEAQTDAPAGGCPAGFGRI. Residues 113–237 constitute a cross-link (tryptophyl-tyrosyl-methioninium (Trp-Tyr) (with M-263)); sequence WHAAGTYRVS…LAAVQMGLIY (125 aa). The Proton acceptor role is filled by His-114. The segment at residues 237-263 is a cross-link (tryptophyl-tyrosyl-methioninium (Tyr-Met) (with W-113)); sequence YVNPEGPNGNPDPQASAIDIRETFGRM. His-278 contacts heme b.

It belongs to the peroxidase family. Peroxidase/catalase subfamily. In terms of assembly, homodimer or homotetramer. Heme b serves as cofactor. In terms of processing, formation of the three residue Trp-Tyr-Met cross-link is important for the catalase, but not the peroxidase activity of the enzyme.

It catalyses the reaction H2O2 + AH2 = A + 2 H2O. The enzyme catalyses 2 H2O2 = O2 + 2 H2O. Its function is as follows. Bifunctional enzyme with both catalase and broad-spectrum peroxidase activity. May play a role in the intracellular survival of mycobacteria. In Mycolicibacterium smegmatis (Mycobacterium smegmatis), this protein is Catalase-peroxidase.